Consider the following 1183-residue polypeptide: Spermatogenesis-associated protein 31G1 (1183 aa).

Disordered regions lie at residues 109 to 153, 469 to 555, 661 to 686, 843 to 884, 973 to 1032, and 1048 to 1087; these read TPIG…FPTF, LMPA…SPWA, TVDD…SSEP, ASQG…VSEV, CLHS…TGLL, and QKRG…PAEA. Residues 124–134 show a composition bias toward basic and acidic residues; it reads CRSEGRPRATE. Residues 135–153 show a composition bias toward polar residues; sequence TQEQVLIQSPSPSRSFPTF. A compositionally biased stretch (basic and acidic residues) spans 487–509; sequence NPKERLSAPKDVRENLGYREHPH. Residues 671–685 show a composition bias toward polar residues; sequence TGKNTDNTKKCSSSE. Residues 847 to 858 are compositionally biased toward pro residues; the sequence is PNPPAVNPPQPT. A compositionally biased stretch (polar residues) spans 975–984; the sequence is HSSSQPQAQA. Over residues 993 to 1002 the composition is skewed to basic residues; the sequence is QKSKRLKRKA. Positions 1069–1079 are enriched in polar residues; sequence SPTNTRENNPA.

As to expression, expressed in kidney and testis. Expressed at lower levels in stomach, intestine, epididymis and ovary. Expressed at very low levels in heart and spleen.

Its function is as follows. Dispensable for normal development and fertility. The protein is Spermatogenesis-associated protein 31G1 (Spata31g1) of Mus musculus (Mouse).